Here is a 205-residue protein sequence, read N- to C-terminus: Small ribosomal subunit protein uS4 (205 aa).

Positions 1 to 44 (MSKRHSQKYKIDRRMGENLWGRPKSPVNSRSYGPGQHGQRRKTK) are disordered. One can recognise an S4 RNA-binding domain in the interval 94 to 173 (SRLDAIVYRC…LPEYIDLDAK (80 aa)).

The protein belongs to the universal ribosomal protein uS4 family. Part of the 30S ribosomal subunit. Contacts protein S5. The interaction surface between S4 and S5 is involved in control of translational fidelity.

In terms of biological role, one of the primary rRNA binding proteins, it binds directly to 16S rRNA where it nucleates assembly of the body of the 30S subunit. Its function is as follows. With S5 and S12 plays an important role in translational accuracy. This chain is Small ribosomal subunit protein uS4, found in Maricaulis maris (strain MCS10) (Caulobacter maris).